The chain runs to 360 residues: Phospho-N-acetylmuramoyl-pentapeptide-transferase (360 aa).

The Periplasmic portion of the chain corresponds to 1 to 25; it reads MLVWLAEHLVKYYSGFNVFSYLTFR. Residues 26-46 traverse the membrane as a helical segment; it reads AIVSLLTALFISLWMGPRMIA. Topologically, residues 47 to 71 are cytoplasmic; the sequence is RLQKLSFGQVVRNDGPESHFSKRGT. The chain crosses the membrane as a helical span at residues 72–92; the sequence is PTMGGIMILTAIVISVLLWAY. Residue Pro93 is a topological domain, periplasmic. Residues 94 to 114 traverse the membrane as a helical segment; the sequence is SNPYVWCVLVVLIGYGIIGFV. The Cytoplasmic portion of the chain corresponds to 115-131; it reads DDYRKVVRKDTKGLIAR. The helical transmembrane segment at 132-152 threads the bilayer; that stretch reads WKYFWMSVIALGVAFALYLVG. The Periplasmic segment spans residues 153–167; the sequence is KDTPATQLVVPFFKD. The helical transmembrane segment at 168-188 threads the bilayer; it reads VMPQLGLFYILLSYFVIVGTG. Residues 189–198 lie on the Cytoplasmic side of the membrane; it reads NAVNLTDGLD. The helical transmembrane segment at 199-219 threads the bilayer; it reads GLAIMPTVFVAAGFALVAWAT. Residues 220–235 lie on the Periplasmic side of the membrane; the sequence is GNMNFANYLHIPYLRH. The helical transmembrane segment at 236 to 256 threads the bilayer; it reads AGELVIVCTAIVGAGLGFLWF. Over 257-262 the chain is Cytoplasmic; it reads NTYPAQ. The helical transmembrane segment at 263 to 283 threads the bilayer; that stretch reads VFMGDVGSLALGGALGIIAVL. At 284 to 287 the chain is on the periplasmic side; the sequence is LRQE. Residues 288 to 308 form a helical membrane-spanning segment; sequence FLLVIMGGVFVVETLSVILQV. Topologically, residues 309 to 337 are cytoplasmic; the sequence is GSFKLRGQRIFRMAPIHHHYELKGWPEPR. The chain crosses the membrane as a helical span at residues 338–358; that stretch reads VIVRFWIISLMLVLIGLATLK. Residues 359–360 are Periplasmic-facing; it reads VR.

Belongs to the glycosyltransferase 4 family. MraY subfamily. Mg(2+) is required as a cofactor.

The protein resides in the cell inner membrane. It catalyses the reaction UDP-N-acetyl-alpha-D-muramoyl-L-alanyl-gamma-D-glutamyl-meso-2,6-diaminopimeloyl-D-alanyl-D-alanine + di-trans,octa-cis-undecaprenyl phosphate = di-trans,octa-cis-undecaprenyl diphospho-N-acetyl-alpha-D-muramoyl-L-alanyl-D-glutamyl-meso-2,6-diaminopimeloyl-D-alanyl-D-alanine + UMP. Its pathway is cell wall biogenesis; peptidoglycan biosynthesis. In terms of biological role, catalyzes the initial step of the lipid cycle reactions in the biosynthesis of the cell wall peptidoglycan: transfers peptidoglycan precursor phospho-MurNAc-pentapeptide from UDP-MurNAc-pentapeptide onto the lipid carrier undecaprenyl phosphate, yielding undecaprenyl-pyrophosphoryl-MurNAc-pentapeptide, known as lipid I. The protein is Phospho-N-acetylmuramoyl-pentapeptide-transferase of Salmonella agona (strain SL483).